The chain runs to 357 residues: Ion-translocating oxidoreductase complex subunit D (357 aa).

The next 3 membrane-spanning stretches (helical) occupy residues 35-55 (VWLY…TVLV), 88-108 (LPPW…VVLG), and 119-139 (LFNP…VEMT). Residue T176 is modified to FMN phosphoryl threonine. 5 helical membrane-spanning segments follow: residues 209 to 229 (APGS…VYLI), 233 to 253 (VIAW…ATVF), 261 to 281 (YADA…FFIA), 295 to 315 (AVFA…GGYP), and 316 to 336 (EATA…DHWI).

This sequence belongs to the NqrB/RnfD family. The complex is composed of six subunits: RnfA, RnfB, RnfC, RnfD, RnfE and RnfG. The cofactor is FMN.

Its subcellular location is the cell inner membrane. In terms of biological role, part of a membrane-bound complex that couples electron transfer with translocation of ions across the membrane. This chain is Ion-translocating oxidoreductase complex subunit D, found in Halorhodospira halophila (strain DSM 244 / SL1) (Ectothiorhodospira halophila (strain DSM 244 / SL1)).